The sequence spans 156 residues: Small ribosomal subunit protein uS7 (156 aa).

Belongs to the universal ribosomal protein uS7 family. Part of the 30S ribosomal subunit. Contacts proteins S9 and S11.

Functionally, one of the primary rRNA binding proteins, it binds directly to 16S rRNA where it nucleates assembly of the head domain of the 30S subunit. Is located at the subunit interface close to the decoding center, probably blocks exit of the E-site tRNA. The protein is Small ribosomal subunit protein uS7 of Rhodospirillum centenum (strain ATCC 51521 / SW).